The chain runs to 62 residues: Pro-MCH variant (62 aa).

The interval 23–41 (GSVAFPAENGVQDTESTQE) is NGE-like. The segment at 29-62 (AENGVQDTESTQEKRETGDEENSAKFPIGRRDFD) is disordered. Residues 44-56 (ETGDEENSAKFPI) form an NEI-like region. The segment at 60–62 (DFD) is melanin-concentrating hormone-like.

Belongs to the melanin-concentrating hormone family.

This Pan paniscus (Pygmy chimpanzee) protein is Pro-MCH variant (PMCHL1).